The primary structure comprises 509 residues: Steroid 17-alpha-hydroxylase/17,20 lyase (509 aa).

Asn-202 is a substrate binding site. Cys-442 provides a ligand contact to heme.

The protein belongs to the cytochrome P450 family. The cofactor is heme.

It is found in the endoplasmic reticulum membrane. Its subcellular location is the microsome membrane. The enzyme catalyses a C21-steroid + reduced [NADPH--hemoprotein reductase] + O2 = a 17alpha-hydroxy-C21-steroid + oxidized [NADPH--hemoprotein reductase] + H2O + H(+). It carries out the reaction progesterone + reduced [NADPH--hemoprotein reductase] + O2 = 17alpha-hydroxyprogesterone + oxidized [NADPH--hemoprotein reductase] + H2O + H(+). The catalysed reaction is pregnenolone + reduced [NADPH--hemoprotein reductase] + O2 = 17alpha-hydroxypregnenolone + oxidized [NADPH--hemoprotein reductase] + H2O + H(+). It catalyses the reaction 17alpha-hydroxyprogesterone + reduced [NADPH--hemoprotein reductase] + O2 = androst-4-ene-3,17-dione + acetate + oxidized [NADPH--hemoprotein reductase] + H2O + 2 H(+). The enzyme catalyses 17alpha-hydroxyprogesterone + reduced [NADPH--hemoprotein reductase] + O2 = 16alpha,17alpha-dihydroxyprogesterone + oxidized [NADPH--hemoprotein reductase] + H2O + H(+). It carries out the reaction 16alpha,17alpha-dihydroxyprogesterone + reduced [NADPH--hemoprotein reductase] + O2 = 6beta,16alpha,17alpha-trihydroxyprogesterone + oxidized [NADPH--hemoprotein reductase] + H2O + H(+). The catalysed reaction is 17alpha-hydroxypregnenolone + reduced [NADPH--hemoprotein reductase] + O2 = 3beta-hydroxyandrost-5-en-17-one + acetate + oxidized [NADPH--hemoprotein reductase] + H2O + 2 H(+). It catalyses the reaction 16alpha,17alpha-dihydroxypregnenolone + reduced [NADPH--hemoprotein reductase] + O2 = 3beta,16alpha-dihydroxy-androst-5-en-17-one + acetate + oxidized [NADPH--hemoprotein reductase] + H2O + 2 H(+). The enzyme catalyses 3beta-hydroxyandrost-5-en-17-one + reduced [NADPH--hemoprotein reductase] + O2 = 3beta,16alpha-dihydroxy-androst-5-en-17-one + oxidized [NADPH--hemoprotein reductase] + H2O + H(+). It carries out the reaction androst-4-ene-3,17-dione + reduced [NADPH--hemoprotein reductase] + O2 = 16alpha-hydroxyandrost-4-ene-3,17-dione + oxidized [NADPH--hemoprotein reductase] + H2O + H(+). The protein operates within steroid hormone biosynthesis. It participates in steroid biosynthesis; glucocorticoid biosynthesis. Regulated predominantly by intracellular cAMP levels. The 17,20-lyase activity is stimulated by cytochrome b5, which acts as an allosteric effector increasing the Vmax of the lyase activity. In terms of biological role, a cytochrome P450 monooxygenase involved in corticoid and androgen biosynthesis. Catalyzes 17-alpha hydroxylation of C21 steroids, which is common for both pathways. A second oxidative step, required only for androgen synthesis, involves an acyl-carbon cleavage. The 17-alpha hydroxy intermediates, as part of adrenal glucocorticoids biosynthesis pathway, are precursors of cortisol. Hydroxylates steroid hormones, pregnenolone and progesterone to form 17-alpha hydroxy metabolites, followed by the cleavage of the C17-C20 bond to form C19 steroids, dehydroepiandrosterone (DHEA) and androstenedione. Has 16-alpha hydroxylase activity. Catalyzes 16-alpha hydroxylation of 17-alpha hydroxy pregnenolone, followed by the cleavage of the C17-C20 bond to form 16-alpha-hydroxy DHEA. Also 16-alpha hydroxylates androgens, relevant for estriol synthesis. Mechanistically, uses molecular oxygen inserting one oxygen atom into a substrate, and reducing the second into a water molecule, with two electrons provided by NADPH via cytochrome P450 reductase (CPR; NADPH-ferrihemoprotein reductase). The polypeptide is Steroid 17-alpha-hydroxylase/17,20 lyase (CYP17A1) (Capra hircus (Goat)).